The following is a 232-amino-acid chain: Fibrillarin-like rRNA/tRNA 2'-O-methyltransferase (232 aa).

Residues 89 to 90 (TT), 108 to 109 (EF), 133 to 134 (DA), and 153 to 156 (DIAQ) each bind S-adenosyl-L-methionine.

It belongs to the methyltransferase superfamily. Fibrillarin family. As to quaternary structure, interacts with nop5. Component of box C/D small ribonucleoprotein (sRNP) particles that contain rpl7ae, FlpA and nop5, plus a guide RNA.

Involved in pre-rRNA and tRNA processing. Utilizes the methyl donor S-adenosyl-L-methionine to catalyze the site-specific 2'-hydroxyl methylation of ribose moieties in rRNA and tRNA. Site specificity is provided by a guide RNA that base pairs with the substrate. Methylation occurs at a characteristic distance from the sequence involved in base pairing with the guide RNA. The sequence is that of Fibrillarin-like rRNA/tRNA 2'-O-methyltransferase from Methanopyrus kandleri (strain AV19 / DSM 6324 / JCM 9639 / NBRC 100938).